Reading from the N-terminus, the 231-residue chain is Chalcone--flavanone isomerase (231 aa).

Substrate is bound by residues Thr46, Asn111, and Ser188.

The protein belongs to the chalcone isomerase family. Pericarp.

The enzyme catalyses a chalcone = a flavanone.. Its pathway is secondary metabolite biosynthesis; flavonoid biosynthesis. Catalyzes the intramolecular cyclization of bicyclic chalcones into tricyclic (S)-flavanones. Responsible for the isomerization of 4,2',4',6'-tetrahydroxychalcone (also termed chalcone) into naringenin. The sequence is that of Chalcone--flavanone isomerase (CHI) from Zea mays (Maize).